Consider the following 454-residue polypeptide: Methylenetetrahydrofolate--tRNA-(uracil-5-)-methyltransferase TrmFO (454 aa).

9-14 is a binding site for FAD; that stretch reads GAGLAG. Residues 432–454 are disordered; sequence LERVSPPSRETGEPTGAEQVDLA.

This sequence belongs to the MnmG family. TrmFO subfamily. Requires FAD as cofactor.

It is found in the cytoplasm. It catalyses the reaction uridine(54) in tRNA + (6R)-5,10-methylene-5,6,7,8-tetrahydrofolate + NADH + H(+) = 5-methyluridine(54) in tRNA + (6S)-5,6,7,8-tetrahydrofolate + NAD(+). The enzyme catalyses uridine(54) in tRNA + (6R)-5,10-methylene-5,6,7,8-tetrahydrofolate + NADPH + H(+) = 5-methyluridine(54) in tRNA + (6S)-5,6,7,8-tetrahydrofolate + NADP(+). In terms of biological role, catalyzes the folate-dependent formation of 5-methyl-uridine at position 54 (M-5-U54) in all tRNAs. This chain is Methylenetetrahydrofolate--tRNA-(uracil-5-)-methyltransferase TrmFO, found in Pelobacter propionicus (strain DSM 2379 / NBRC 103807 / OttBd1).